The following is a 179-amino-acid chain: Inner membrane-spanning protein YciB (179 aa).

5 consecutive transmembrane segments (helical) span residues 11 to 31 (ILFF…TLII), 52 to 69 (LIMG…AYFN), 71 to 91 (LEFL…ILLV), 121 to 141 (LGWA…SQYL), and 149 to 169 (FKTF…GVYI).

Belongs to the YciB family.

Its subcellular location is the cell inner membrane. Functionally, plays a role in cell envelope biogenesis, maintenance of cell envelope integrity and membrane homeostasis. The polypeptide is Inner membrane-spanning protein YciB (Histophilus somni (strain 129Pt) (Haemophilus somnus)).